The sequence spans 1024 residues: Multidrug resistance protein MdtC (1024 aa).

The next 12 membrane-spanning stretches (helical) occupy residues 3–23 (FLSLFIYRPVATSLLTLALVL), 333–353 (EVEQSLAVSVGLVVLVVFAFL), 360–380 (LIPAVAVPVSLIGTFAAMYLC), 387–407 (LSLMALTVASGFVVDDAIVVL), 431–451 (VGFTVVSMSVSLIAVFIPLLM), 463–483 (FAITLSVSIAISLVISLTLTP), 528–548 (WALLVFVASLGLTVYLFISMP), 853–873 (LWLILAAIATVYIVLGMLYES), 875–895 (VHPLTILSTLPSAGMGALLAL), 897–917 (LFNTPFSLIALIGILLLIGIV), 953–973 (PIIMTTLAAMLGALPLVLSSG), and 984–1004 (ITIVGGLVVSQLLTLFTTPVV).

Belongs to the resistance-nodulation-cell division (RND) (TC 2.A.6) family. MdtC subfamily. As to quaternary structure, part of a tripartite efflux system composed of MdtA, MdtB and MdtC. MdtC forms a heteromultimer with MdtB.

The protein resides in the cell inner membrane. The sequence is that of Multidrug resistance protein MdtC from Erwinia amylovora (strain ATCC 49946 / CCPPB 0273 / Ea273 / 27-3).